Consider the following 1405-residue polypeptide: DNA-directed RNA polymerase subunit beta' (1405 aa).

Positions 65, 67, 80, and 83 each coordinate Zn(2+). The Mg(2+) site is built by D468, D470, and D472. Zn(2+) is bound by residues C811, C885, C892, and C895.

The protein belongs to the RNA polymerase beta' chain family. The RNAP catalytic core consists of 2 alpha, 1 beta, 1 beta' and 1 omega subunit. When a sigma factor is associated with the core the holoenzyme is formed, which can initiate transcription. Mg(2+) serves as cofactor. Requires Zn(2+) as cofactor.

The enzyme catalyses RNA(n) + a ribonucleoside 5'-triphosphate = RNA(n+1) + diphosphate. Functionally, DNA-dependent RNA polymerase catalyzes the transcription of DNA into RNA using the four ribonucleoside triphosphates as substrates. The polypeptide is DNA-directed RNA polymerase subunit beta' (Azobacteroides pseudotrichonymphae genomovar. CFP2).